A 490-amino-acid polypeptide reads, in one-letter code: Betaine aldehyde dehydrogenase (490 aa).

Residues threonine 26, isoleucine 27, and aspartate 93 each contribute to the K(+) site. Position 150–152 (150–152 (GAW)) interacts with NAD(+). Lysine 162 (charge relay system) is an active-site residue. 176–179 (KPSE) contacts NAD(+). A K(+)-binding site is contributed by valine 180. 230–233 (GVAS) is an NAD(+) binding site. Position 246 (leucine 246) interacts with K(+). Glutamate 252 functions as the Proton acceptor in the catalytic mechanism. NAD(+)-binding residues include glycine 254, cysteine 286, and glutamate 387. Cysteine 286 acts as the Nucleophile in catalysis. Residue cysteine 286 is modified to Cysteine sulfenic acid (-SOH). Lysine 457 and glycine 460 together coordinate K(+). The active-site Charge relay system is the glutamate 464.

It belongs to the aldehyde dehydrogenase family. Dimer of dimers. Requires K(+) as cofactor.

The enzyme catalyses betaine aldehyde + NAD(+) + H2O = glycine betaine + NADH + 2 H(+). Its pathway is amine and polyamine biosynthesis; betaine biosynthesis via choline pathway; betaine from betaine aldehyde: step 1/1. In terms of biological role, involved in the biosynthesis of the osmoprotectant glycine betaine. Catalyzes the irreversible oxidation of betaine aldehyde to the corresponding acid. In Escherichia coli (strain K12 / DH10B), this protein is Betaine aldehyde dehydrogenase.